Consider the following 421-residue polypeptide: Testin (421 aa).

Positions 92–199 (MILTNPVAAK…GDVKLPCEMD (108 aa)) constitute a PET domain. Positions 133-164 (EKQPVAGSEGAQYRKKQLAKQLPAHDQDPSKC) are disordered. The span at 155 to 164 (PAHDQDPSKC) shows a compositional bias: basic and acidic residues. 3 LIM zinc-binding domains span residues 234–297 (YFCY…CDSE), 299–359 (PRCA…NHAV), and 362–421 (QGCH…KMMS).

It belongs to the prickle / espinas / testin family. As to quaternary structure, interacts via LIM domain 1 with ZYX. Interacts (via LIM domain 3) with ENAH and VASP. Interacts with ALKBH4, talin, actin, alpha-actinin, GRIP1 and PXN. Interacts (via LIM domain 2) with ACTL7A (via N-terminus). Heterodimer with ACTL7A; the heterodimer interacts with ENAH to form a heterotrimer.

Its subcellular location is the cytoplasm. The protein resides in the cell junction. It is found in the focal adhesion. Its function is as follows. Scaffold protein that may play a role in cell adhesion, cell spreading and in the reorganization of the actin cytoskeleton. Plays a role in the regulation of cell proliferation. May act as a tumor suppressor. This chain is Testin (TES), found in Plecturocebus moloch (Dusky titi monkey).